Reading from the N-terminus, the 678-residue chain is DNA ligase (678 aa).

NAD(+) is bound by residues 47–51, 96–97, and glutamate 122; these read DSDYD and SL. Lysine 124 functions as the N6-AMP-lysine intermediate in the catalytic mechanism. Positions 145, 182, 300, and 324 each coordinate NAD(+). Residues cysteine 418, cysteine 421, cysteine 436, and cysteine 442 each coordinate Zn(2+). Residues 602–678 form the BRCT domain; that stretch reads AYNESFTGKT…ILEDNLKDLL (77 aa).

The protein belongs to the NAD-dependent DNA ligase family. LigA subfamily. The cofactor is Mg(2+). Mn(2+) serves as cofactor.

It carries out the reaction NAD(+) + (deoxyribonucleotide)n-3'-hydroxyl + 5'-phospho-(deoxyribonucleotide)m = (deoxyribonucleotide)n+m + AMP + beta-nicotinamide D-nucleotide.. Its function is as follows. DNA ligase that catalyzes the formation of phosphodiester linkages between 5'-phosphoryl and 3'-hydroxyl groups in double-stranded DNA using NAD as a coenzyme and as the energy source for the reaction. It is essential for DNA replication and repair of damaged DNA. This Francisella tularensis subsp. tularensis (strain SCHU S4 / Schu 4) protein is DNA ligase.